Reading from the N-terminus, the 360-residue chain is MKPSIVAKLEALHERHEEVQALLGDAATIADQDRFRALSREYAQLSDVSRCFTDWQQVQEDIETAQMMLDDPEMREMAQEELQEAKARAEEMEQQLQVLLLPKDPDDERNAFVEVRAGTGGDEAALFAGDLFRMYSRYAESRRWRVEIMSANEGEHGGYKEVIAKISGEGVYGRLKFESGGHRVQRVPATESQGRIHTSACTVAVMPEVPEAELPDINPGDLRIDTFRSSGAGGQHVNTTDSAIRITHLPTGIVVECQDERSQHKNKAKALSVLGSRIRAAEIAKRQQAEASTRRNLLGSGDRSDRNRTYNFPQGRVTDHRINLTIYRLDEIMEGKLDSLIEPIVQEYQADQLAALADQD.

Glutamine 235 carries the N5-methylglutamine modification. A disordered region spans residues lysine 285 to proline 313.

It belongs to the prokaryotic/mitochondrial release factor family. Methylated by PrmC. Methylation increases the termination efficiency of RF1.

It localises to the cytoplasm. In terms of biological role, peptide chain release factor 1 directs the termination of translation in response to the peptide chain termination codons UAG and UAA. The polypeptide is Peptide chain release factor 1 (Enterobacter sp. (strain 638)).